The sequence spans 373 residues: tRNA-specific 2-thiouridylase MnmA (373 aa).

Residues glycine 12–serine 19 and methionine 38 each bind ATP. The interval asparagine 98–aspartate 100 is interaction with target base in tRNA. Cysteine 103 acts as the Nucleophile in catalysis. A disulfide bridge connects residues cysteine 103 and cysteine 200. Glycine 127 serves as a coordination point for ATP. Residues lysine 150–glutamine 152 form an interaction with tRNA region. Cysteine 200 functions as the Cysteine persulfide intermediate in the catalytic mechanism. The interaction with tRNA stretch occupies residues arginine 312 to tyrosine 313.

Belongs to the MnmA/TRMU family.

It localises to the cytoplasm. The catalysed reaction is S-sulfanyl-L-cysteinyl-[protein] + uridine(34) in tRNA + AH2 + ATP = 2-thiouridine(34) in tRNA + L-cysteinyl-[protein] + A + AMP + diphosphate + H(+). Its function is as follows. Catalyzes the 2-thiolation of uridine at the wobble position (U34) of tRNA, leading to the formation of s(2)U34. The chain is tRNA-specific 2-thiouridylase MnmA from Streptococcus pyogenes serotype M6 (strain ATCC BAA-946 / MGAS10394).